Reading from the N-terminus, the 474-residue chain is L-arabinose isomerase (474 aa).

Mn(2+)-binding residues include Glu-306, Glu-331, His-348, and His-447.

The protein belongs to the arabinose isomerase family. The cofactor is Mn(2+).

It carries out the reaction beta-L-arabinopyranose = L-ribulose. It participates in carbohydrate degradation; L-arabinose degradation via L-ribulose; D-xylulose 5-phosphate from L-arabinose (bacterial route): step 1/3. Functionally, catalyzes the conversion of L-arabinose to L-ribulose. In Leuconostoc mesenteroides subsp. mesenteroides (strain ATCC 8293 / DSM 20343 / BCRC 11652 / CCM 1803 / JCM 6124 / NCDO 523 / NBRC 100496 / NCIMB 8023 / NCTC 12954 / NRRL B-1118 / 37Y), this protein is L-arabinose isomerase.